Reading from the N-terminus, the 77-residue chain is Acyl carrier protein (77 aa).

The Carrier domain occupies 1–76 (MAIFDDVKKV…DVVNYIENLQ (76 aa)). Ser36 carries the post-translational modification O-(pantetheine 4'-phosphoryl)serine.

It belongs to the acyl carrier protein (ACP) family. Post-translationally, 4'-phosphopantetheine is transferred from CoA to a specific serine of apo-ACP by AcpS. This modification is essential for activity because fatty acids are bound in thioester linkage to the sulfhydryl of the prosthetic group.

It is found in the cytoplasm. It functions in the pathway lipid metabolism; fatty acid biosynthesis. Carrier of the growing fatty acid chain in fatty acid biosynthesis. This chain is Acyl carrier protein, found in Campylobacter lari (strain RM2100 / D67 / ATCC BAA-1060).